The following is a 140-amino-acid chain: Large ribosomal subunit protein uL11 (140 aa).

The protein belongs to the universal ribosomal protein uL11 family. As to quaternary structure, part of the ribosomal stalk of the 50S ribosomal subunit. Interacts with L10 and the large rRNA to form the base of the stalk. L10 forms an elongated spine to which L12 dimers bind in a sequential fashion forming a multimeric L10(L12)X complex. Post-translationally, one or more lysine residues are methylated.

Functionally, forms part of the ribosomal stalk which helps the ribosome interact with GTP-bound translation factors. This is Large ribosomal subunit protein uL11 from Brachyspira hyodysenteriae (strain ATCC 49526 / WA1).